Here is a 233-residue protein sequence, read N- to C-terminus: Probable septum site-determining protein MinC (233 aa).

Positions 98 to 123 (LTEGKEKAPRPAPSEPTPPPPPVANQ) are disordered. Over residues 107–120 (RPAPSEPTPPPPPV) the composition is skewed to pro residues.

The protein belongs to the MinC family. Interacts with MinD and FtsZ.

Cell division inhibitor that blocks the formation of polar Z ring septums. Rapidly oscillates between the poles of the cell to destabilize FtsZ filaments that have formed before they mature into polar Z rings. Prevents FtsZ polymerization. In Klebsiella pneumoniae (strain 342), this protein is Probable septum site-determining protein MinC.